A 185-amino-acid polypeptide reads, in one-letter code: ATP-dependent protease subunit HslV (185 aa).

Residue threonine 12 is part of the active site. Na(+)-binding residues include alanine 168, cysteine 171, and threonine 174.

Belongs to the peptidase T1B family. HslV subfamily. As to quaternary structure, a double ring-shaped homohexamer of HslV is capped on each side by a ring-shaped HslU homohexamer. The assembly of the HslU/HslV complex is dependent on binding of ATP.

It is found in the cytoplasm. It catalyses the reaction ATP-dependent cleavage of peptide bonds with broad specificity.. Its activity is regulated as follows. Allosterically activated by HslU binding. Its function is as follows. Protease subunit of a proteasome-like degradation complex believed to be a general protein degrading machinery. The protein is ATP-dependent protease subunit HslV of Cereibacter sphaeroides (strain KD131 / KCTC 12085) (Rhodobacter sphaeroides).